Reading from the N-terminus, the 2060-residue chain is Unconventional myosin-X (2060 aa).

M1 is modified (N-acetylmethionine). The region spanning 63–739 is the Myosin motor domain; that stretch reads EGVDDMASLT…LEQKLEKRRE (677 aa). ATP-binding positions include N104, Y113, 160 to 165, and N215; that span reads GAGKTE. The interval 619–641 is actin-binding; sequence LHSLMATLSSSNPFFVRCIKPNT. 3 consecutive IQ domains span residues 742–771, 765–794, and 788–817; these read IDRA…GVVT, VLCG…AAIV, and LKKA…EKRE. Residues 814–882 are SAH; it reads EKRELEERKR…LTRELEKQRE (69 aa). A coiled-coil region spans residues 883-933; the sequence is NKQVEEILRLEKEIEDLQRMKEQQELSLTEASLQKLQQLRDEELRRLEDEA. S961, S964, and S967 each carry phosphoserine. Disordered stretches follow at residues 971–1039 and 1064–1088; these read SELA…PYMN and SLHN…PSPD. The segment covering 991–1005 has biased composition (acidic residues); sequence PEEEVDEGFEADDDA. The segment covering 1064 to 1083 has biased composition (polar residues); the sequence is SLHNSSSGESTYCMPQNNGD. Residue T1160 is modified to Phosphothreonine. 2 PH domains span residues 1214–1312 and 1394–1499; these read EALK…QVHS and EFIV…NVTD. Residues 1549–1697 enclose the MyTH4 domain; it reads LPYGDINLNL…PSRDEIEALI (149 aa). Residues 1702 to 2046 form the FERM domain; the sequence is MTSTVYCHGG…AYISMIVKKR (345 aa).

This sequence belongs to the TRAFAC class myosin-kinesin ATPase superfamily. Myosin family. In terms of assembly, monomer, when in an inactive conformation in the cytosol. Homodimer in its active, membrane-bound conformation; antiparallel coiled coil-mediated dimer formation. Interacts with ECPAS. Interacts with DCC and ITGB5; the presence of DCC inhibits ITGB5 binding. Interacts with tubulin; ITGB5 or DCC binding inhibits tubulin binding. Interacts strongly with CALM3 and weakly with CALM, the CALM3 interaction is essential for function in filopodial extension and motility. Interacts with ITGB1, ITGB3 and ITGB5. Interacts with NEO1. Interacts with VASP.

It localises to the cytoplasm. The protein resides in the cytosol. Its subcellular location is the cell projection. The protein localises to the lamellipodium. It is found in the ruffle. It localises to the cytoskeleton. The protein resides in the filopodium tip. Its subcellular location is the cell cortex. The protein localises to the filopodium membrane. It is found in the cell membrane. In terms of biological role, myosins are actin-based motor molecules with ATPase activity. Unconventional myosins serve in intracellular movements. MYO10 binds to actin filaments and actin bundles and functions as a plus end-directed motor. Moves with higher velocity and takes larger steps on actin bundles than on single actin filaments. The tail domain binds to membranous compartments containing phosphatidylinositol 3,4,5-trisphosphate or integrins, and mediates cargo transport along actin filaments. Regulates cell shape, cell spreading and cell adhesion. Stimulates the formation and elongation of filopodia. In hippocampal neurons it induces the formation of dendritic filopodia by trafficking the actin-remodeling protein VASP to the tips of filopodia, where it promotes actin elongation. Plays a role in formation of the podosome belt in osteoclasts. The polypeptide is Unconventional myosin-X (Myo10) (Rattus norvegicus (Rat)).